The primary structure comprises 189 residues: Putative L,D-transpeptidase in ATP synthase subunits region ORF 5 (189 aa).

Residues 1 to 35 (MTDTLNRRAAMALGLASAAGAALATPALSQDAAPA) constitute a signal peptide (tat-type signal). A L,D-TPase catalytic domain is found at 59–189 (PMLVADTFSR…CPVGTRVRVI (131 aa)). Histidine 149 serves as the catalytic Proton donor/acceptor. The Nucleophile role is filled by cysteine 165.

Belongs to the YkuD family. Post-translationally, predicted to be exported by the Tat system. The position of the signal peptide cleavage has not been experimentally proven.

It functions in the pathway cell wall biogenesis; peptidoglycan biosynthesis. The chain is Putative L,D-transpeptidase in ATP synthase subunits region ORF 5 from Fuscovulum blasticum (Rhodobacter blasticus).